Reading from the N-terminus, the 262-residue chain is tRNA 4-demethylwyosine(37)-methyltransferase Taw21 (262 aa).

Residues His-108, Phe-125, 148 to 149 (DL), and 175 to 176 (DA) contribute to the S-adenosyl-L-methionine site.

This sequence belongs to the class I-like SAM-binding methyltransferase superfamily. TRM5/TYW2 family.

It is found in the cytoplasm. It catalyses the reaction 4-demethylwyosine(37) in tRNA(Phe) + S-adenosyl-L-methionine = isowyosine(37) in tRNA(Phe) + S-adenosyl-L-homocysteine + H(+). Functionally, catalyzes the C7-methylation of 4-demethylwyosine (imG-14) at position 37 in tRNA(Phe). The sequence is that of tRNA 4-demethylwyosine(37)-methyltransferase Taw21 from Saccharolobus solfataricus (strain ATCC 35092 / DSM 1617 / JCM 11322 / P2) (Sulfolobus solfataricus).